The following is a 497-amino-acid chain: Interferon regulatory factor 5 (497 aa).

A Nuclear localization signal motif is present at residues 12–18 (PRRVRLK). The IRF tryptophan pentad repeat DNA-binding region spans 14–122 (RVRLKPWLVA…QPYKIYEVCS (109 aa)). Residues 124 to 178 (GPAPTESQPTDDYVLGEEEEEEEEELQRMLPGLSITEPALPGPPNAPYSLPKEDT) form a disordered region. Over residues 137–148 (VLGEEEEEEEEE) the composition is skewed to acidic residues. Positions 149-159 (LQRMLPGLSIT) match the Nuclear export signal motif. S157 is modified (phosphoserine; by TBK1). S300 carries the post-translational modification Phosphoserine. Glycyl lysine isopeptide (Lys-Gly) (interchain with G-Cter in ubiquitin) cross-links involve residues K410 and K411. S430 carries the post-translational modification Phosphoserine. S434 is subject to Phosphoserine; by IKKB. S436 and S439 each carry phosphoserine. Phosphoserine; by IKKB is present on S445.

It belongs to the IRF family. As to quaternary structure, homodimer, when phosphorylated. Interacts with TASL (via pLxIS motif); interaction takes place downstream of TLR7, TLR8 or TLR9, leading to its activation. Interacts with MYD88 and TRAF6. Phosphorylation of serine and threonine residues by IKBKB in a C-terminal autoinhibitory region, stimulates dimerization, transport into the nucleus, assembly with the coactivator CBP/EP300 and initiation of transcription. In terms of processing, 'Lys-63'-linked polyubiquitination by TRAF6 is required for activation.

The protein localises to the cytoplasm. It is found in the nucleus. Its activity is regulated as follows. Maintained as a monomer in an autoinhibited state. Phosphorylation and activation follow the following steps: innate adapter protein TASL recruits IRF5, thereby licensing IRF5 for phosphorylation by IKBKB. Phosphorylated IRF5 dissociates from the adapter proteins, dimerizes, and then enters the nucleus to induce IFNs. In terms of biological role, transcription factor that plays a critical role in innate immunity by activating expression of type I interferon (IFN) IFNA and INFB and inflammatory cytokines downstream of endolysosomal toll-like receptors TLR7, TLR8 and TLR9. Regulates the transcription of type I IFN genes (IFN-alpha and IFN-beta) and IFN-stimulated genes (ISG) by binding to an interferon-stimulated response element (ISRE) in their promoters. Can efficiently activate both the IFN-beta (IFNB) and the IFN-alpha (IFNA) genes and mediate their induction downstream of the TLR-activated, MyD88-dependent pathway. The polypeptide is Interferon regulatory factor 5 (Mus musculus (Mouse)).